Consider the following 111-residue polypeptide: Large ribosomal subunit protein uL22 (111 aa).

The protein belongs to the universal ribosomal protein uL22 family. As to quaternary structure, part of the 50S ribosomal subunit.

This protein binds specifically to 23S rRNA; its binding is stimulated by other ribosomal proteins, e.g. L4, L17, and L20. It is important during the early stages of 50S assembly. It makes multiple contacts with different domains of the 23S rRNA in the assembled 50S subunit and ribosome. Its function is as follows. The globular domain of the protein is located near the polypeptide exit tunnel on the outside of the subunit, while an extended beta-hairpin is found that lines the wall of the exit tunnel in the center of the 70S ribosome. This chain is Large ribosomal subunit protein uL22, found in Clostridioides difficile (strain 630) (Peptoclostridium difficile).